The sequence spans 184 residues: MSIKADRWIKRMAQEHGMIEPFVDGQVRGGVVSYGLSSYGYDIRIADEFKIFTNVNSAIIDPKNFDPRSFVDVKADVCIIPPNSFVLCRTIEYFRIPRNVLCVCVGKSTYARCGLIANVTPFEPGWEGYVTIEISNTTPLPAKIYANEGIAQVLFFEGDELPDVAYDDRSGKYQGQTGVTLPRI.

107–112 (KSTYAR) lines the dCTP pocket. Glu133 functions as the Proton donor/acceptor in the catalytic mechanism. Residues Gln152, Tyr166, and Gln176 each coordinate dCTP.

It belongs to the dCTP deaminase family. As to quaternary structure, homotrimer.

It carries out the reaction dCTP + H2O + H(+) = dUTP + NH4(+). It participates in pyrimidine metabolism; dUMP biosynthesis; dUMP from dCTP (dUTP route): step 1/2. Catalyzes the deamination of dCTP to dUTP. The sequence is that of dCTP deaminase from Herpetosiphon aurantiacus (strain ATCC 23779 / DSM 785 / 114-95).